Consider the following 139-residue polypeptide: Large ribosomal subunit protein uL16 (139 aa).

The segment covering 1–13 (MLQPARRKYRKEQ) has biased composition (basic residues). Residues 1–23 (MLQPARRKYRKEQKGRNTGISHS) form a disordered region.

The protein belongs to the universal ribosomal protein uL16 family. As to quaternary structure, part of the 50S ribosomal subunit.

Functionally, binds 23S rRNA and is also seen to make contacts with the A and possibly P site tRNAs. This is Large ribosomal subunit protein uL16 from Herminiimonas arsenicoxydans.